Reading from the N-terminus, the 560-residue chain is Protein GAT2 (560 aa).

Disordered regions lie at residues Arg274–Lys297, Phe345–Ser383, and Leu412–Lys461. Residues Ser347–Pro361 show a composition bias toward low complexity. Basic and acidic residues predominate over residues Arg369 to Met378. Over residues Thr414–Ala425 the composition is skewed to basic residues. Polar residues predominate over residues Arg428–Ala456. The GATA-type zinc-finger motif lies at Cys472 to Cys497.

This chain is Protein GAT2 (GAT2), found in Saccharomyces cerevisiae (strain ATCC 204508 / S288c) (Baker's yeast).